Here is a 177-residue protein sequence, read N- to C-terminus: Large ribosomal subunit protein uL6 (177 aa).

It belongs to the universal ribosomal protein uL6 family. As to quaternary structure, part of the 50S ribosomal subunit.

Its function is as follows. This protein binds to the 23S rRNA, and is important in its secondary structure. It is located near the subunit interface in the base of the L7/L12 stalk, and near the tRNA binding site of the peptidyltransferase center. The sequence is that of Large ribosomal subunit protein uL6 from Rickettsia peacockii (strain Rustic).